A 362-amino-acid polypeptide reads, in one-letter code: MGIRSTSVSDAVAALDERSREIFRRIVEGYLESGEPLGSRNLSRILPMSLSPASVRNVMSDLEELGLIYSPHVSAGRLPTQIGLRFFVDAFMQVGDLSAEERASIDRQVRVESGGNPVESMMNEASRMLSGISRGAGLVITSKSDPVLKHVEFIRLEPTKALAVLVGDHDQVENRIIELPAGVTSSQLTEAANFLNAHMSGQTLPELRKQLSRLKDDVRHELDALSRDLVERGIAVWAGSPDEGKPTQLIIRGRANLLEGLAGAEDLDRLRLLFDDLEKKDSLIEILNLAESGSGVRIFIGSENKLFSLSGSSLIVAPYRDDDDRIVGAVGVIGPTRLNYSRIVPMVDYTAQLVSRLSRSQL.

Belongs to the HrcA family.

Functionally, negative regulator of class I heat shock genes (grpE-dnaK-dnaJ and groELS operons). Prevents heat-shock induction of these operons. The sequence is that of Heat-inducible transcription repressor HrcA from Rhizobium johnstonii (strain DSM 114642 / LMG 32736 / 3841) (Rhizobium leguminosarum bv. viciae).